A 110-amino-acid chain; its full sequence is Ribonuclease P protein component 1 (110 aa).

The protein belongs to the eukaryotic/archaeal RNase P protein component 1 family. Consists of a catalytic RNA component and at least 4-5 protein subunits.

It is found in the cytoplasm. It catalyses the reaction Endonucleolytic cleavage of RNA, removing 5'-extranucleotides from tRNA precursor.. Its function is as follows. Part of ribonuclease P, a protein complex that generates mature tRNA molecules by cleaving their 5'-ends. This Aeropyrum pernix (strain ATCC 700893 / DSM 11879 / JCM 9820 / NBRC 100138 / K1) protein is Ribonuclease P protein component 1.